The following is a 375-amino-acid chain: 2-methylcitrate synthase (375 aa).

Substrate contacts are provided by lysine 72 and histidine 187. Histidine 222 is a catalytic residue. 255 to 259 (KIMGF) provides a ligand contact to CoA. Histidine 261 is a catalytic residue. A substrate-binding site is contributed by arginine 270. Aspartate 312 is a catalytic residue. 2 residues coordinate substrate: arginine 337 and arginine 356.

It belongs to the citrate synthase family. Homodimer.

The catalysed reaction is propanoyl-CoA + oxaloacetate + H2O = (2S,3S)-2-methylcitrate + CoA + H(+). It catalyses the reaction oxaloacetate + acetyl-CoA + H2O = citrate + CoA + H(+). Its pathway is organic acid metabolism; propanoate degradation. It participates in carbohydrate metabolism; tricarboxylic acid cycle; isocitrate from oxaloacetate: step 1/2. In terms of biological role, involved in the catabolism of short chain fatty acids (SCFA) via the tricarboxylic acid (TCA)(acetyl degradation route) and via the 2-methylcitrate cycle II (propionate degradation route). Catalyzes the Claisen condensation of propionyl-CoA and oxaloacetate (OAA) to yield 2-methylcitrate (2-MC) and CoA. Catalyzes the condensation of oxaloacetate with acetyl-CoA. This chain is 2-methylcitrate synthase (prpC), found in Shewanella oneidensis (strain ATCC 700550 / JCM 31522 / CIP 106686 / LMG 19005 / NCIMB 14063 / MR-1).